The chain runs to 285 residues: ATP synthase subunit a (285 aa).

6 consecutive transmembrane segments (helical) span residues 41-61, 102-122, 164-184, 197-217, 226-246, and 252-272; these read TWHVDTLAWSIGLGLIFLWIF, IAPLALTIFVWVFLMNLMDLI, LGVFILMVGFAIKIKGIGGFI, VFVQILLIPFNLLLELIALVS, LFGNLYAGELIFILIGAIGFM, and FVWAVFHILVITLQAFLFMML.

It belongs to the ATPase A chain family. As to quaternary structure, F-type ATPases have 2 components, CF(1) - the catalytic core - and CF(0) - the membrane proton channel. CF(1) has five subunits: alpha(3), beta(3), gamma(1), delta(1), epsilon(1). CF(0) has three main subunits: a(1), b(2) and c(9-12). The alpha and beta chains form an alternating ring which encloses part of the gamma chain. CF(1) is attached to CF(0) by a central stalk formed by the gamma and epsilon chains, while a peripheral stalk is formed by the delta and b chains.

The protein resides in the cell inner membrane. Key component of the proton channel; it plays a direct role in the translocation of protons across the membrane. The chain is ATP synthase subunit a from Pseudoalteromonas translucida (strain TAC 125).